The chain runs to 858 residues: Translation initiation factor IF-2 (858 aa).

Positions 59 to 147 are disordered; sequence KEHAEKRRER…GKKLEGQERK (89 aa). Residues 361–530 enclose the tr-type G domain; that stretch reads PRPPVVVVMG…LLVADLLELK (170 aa). A G1 region spans residues 370–377; the sequence is GHVDHGKT. 370–377 contributes to the GTP binding site; the sequence is GHVDHGKT. The interval 395 to 399 is G2; that stretch reads GITQH. The interval 416-419 is G3; it reads DTPG. Residues 416–420 and 470–473 contribute to the GTP site; these read DTPGH and NKID. The G4 stretch occupies residues 470–473; that stretch reads NKID. The tract at residues 506–508 is G5; that stretch reads SAK.

This sequence belongs to the TRAFAC class translation factor GTPase superfamily. Classic translation factor GTPase family. IF-2 subfamily.

The protein localises to the cytoplasm. One of the essential components for the initiation of protein synthesis. Protects formylmethionyl-tRNA from spontaneous hydrolysis and promotes its binding to the 30S ribosomal subunits. Also involved in the hydrolysis of GTP during the formation of the 70S ribosomal complex. This is Translation initiation factor IF-2 from Caldicellulosiruptor saccharolyticus (strain ATCC 43494 / DSM 8903 / Tp8T 6331).